The primary structure comprises 166 residues: Bacterial microcompartment shell protein EutK (166 aa).

The region spanning 4 to 88 is the BMC domain; the sequence is ALGLLEVDGM…PDDDTQWLVT (85 aa). Residues 109-165 form the EutK-Ctail domain; the sequence is ESADELLALLTSVRQGMTAGEVAAHFGWPLEKARNALEQLFSAGTLRKRSSRYRLKP.

It belongs to the bacterial microcompartments protein family. In terms of assembly, monomeric in solution.

Its subcellular location is the bacterial microcompartment. It participates in amine and polyamine degradation; ethanolamine degradation. Its function is as follows. Probably a minor component of the bacterial microcompartment (BMC) shell dedicated to ethanolamine degradation. It might bind nucleic acids. The chain is Bacterial microcompartment shell protein EutK (eutK) from Escherichia coli (strain K12).